The primary structure comprises 351 residues: Hydroxymethylglutaryl-CoA synthase (351 aa).

The Proton donor/acceptor role is filled by Glu-80. Residue Cys-112 is the Acyl-thioester intermediate of the active site. The (3S)-3-hydroxy-3-methylglutaryl-CoA site is built by Cys-112 and Ser-153. Arg-199 is a binding site for CoA. (3S)-3-hydroxy-3-methylglutaryl-CoA-binding residues include Thr-201 and His-234. His-234 (proton donor/acceptor) is an active-site residue. CoA is bound at residue Lys-239. Positions 243, 266, and 296 each coordinate (3S)-3-hydroxy-3-methylglutaryl-CoA.

This sequence belongs to the thiolase-like superfamily. Archaeal HMG-CoA synthase family. As to quaternary structure, interacts with acetoacetyl-CoA thiolase that catalyzes the precedent step in the pathway and with a DUF35 protein. The acetoacetyl-CoA thiolase/HMG-CoA synthase complex channels the intermediate via a fused CoA-binding site, which allows for efficient coupling of the endergonic thiolase reaction with the exergonic HMGCS reaction.

It catalyses the reaction acetoacetyl-CoA + acetyl-CoA + H2O = (3S)-3-hydroxy-3-methylglutaryl-CoA + CoA + H(+). It participates in metabolic intermediate biosynthesis; (R)-mevalonate biosynthesis; (R)-mevalonate from acetyl-CoA: step 2/3. In terms of biological role, catalyzes the condensation of acetyl-CoA with acetoacetyl-CoA to form 3-hydroxy-3-methylglutaryl-CoA (HMG-CoA). Functions in the mevalonate (MVA) pathway leading to isopentenyl diphosphate (IPP), a key precursor for the biosynthesis of isoprenoid compounds that are building blocks of archaeal membrane lipids. This Thermoplasma volcanium (strain ATCC 51530 / DSM 4299 / JCM 9571 / NBRC 15438 / GSS1) protein is Hydroxymethylglutaryl-CoA synthase.